The primary structure comprises 268 residues: Imidazole glycerol phosphate synthase subunit HisF (268 aa).

Active-site residues include aspartate 12 and aspartate 131.

The protein belongs to the HisA/HisF family. In terms of assembly, heterodimer of HisH and HisF.

Its subcellular location is the cytoplasm. It carries out the reaction 5-[(5-phospho-1-deoxy-D-ribulos-1-ylimino)methylamino]-1-(5-phospho-beta-D-ribosyl)imidazole-4-carboxamide + L-glutamine = D-erythro-1-(imidazol-4-yl)glycerol 3-phosphate + 5-amino-1-(5-phospho-beta-D-ribosyl)imidazole-4-carboxamide + L-glutamate + H(+). It participates in amino-acid biosynthesis; L-histidine biosynthesis; L-histidine from 5-phospho-alpha-D-ribose 1-diphosphate: step 5/9. Functionally, IGPS catalyzes the conversion of PRFAR and glutamine to IGP, AICAR and glutamate. The HisF subunit catalyzes the cyclization activity that produces IGP and AICAR from PRFAR using the ammonia provided by the HisH subunit. This chain is Imidazole glycerol phosphate synthase subunit HisF, found in Methanoculleus marisnigri (strain ATCC 35101 / DSM 1498 / JR1).